An 89-amino-acid chain; its full sequence is Protein S100-A8 (89 aa).

An N-acetylalanine modification is found at Ala2. EF-hand domains follow at residues 13-48 (IEVY…FVQN) and 46-81 (VQNK…VGVA). Zn(2+) contacts are provided by His17 and His27. Asp33 is a binding site for Ca(2+). At Cys42 the chain carries S-nitrosocysteine. Ca(2+) contacts are provided by Asp59, Asn61, Asp63, and Glu70. His83 is a binding site for Zn(2+).

This sequence belongs to the S-100 family. Homodimer. Preferentially exists as a heterodimer or heterotetramer with S100A9 known as calprotectin (S100A8/A9). S100A8 interacts with AGER, ATP2A2 and with the heterodimeric complex formed by TLR4 and LY96. Calprotectin (S100A8/9) interacts with CEACAM3 and tubulin filaments in a calcium-dependent manner. Heterotetrameric calprotectin (S100A8/A9) interacts with ANXA6 and associates with tubulin filaments in activated monocytes. S100A8 and calprotectin (S100A8/9) interact with NCF2/P67PHOX, RAC1 and RAC2. Calprotectin (S100A8/9) interacts with CYBA and CYBB. Calprotectin (S100A8/9) interacts with NOS2 to form the iNOS-S100A8/A9 transnitrosylase complex. Calprotectin (S100A8/9) interacts with CD69.

It is found in the secreted. The protein resides in the cytoplasm. The protein localises to the cytoskeleton. It localises to the cell membrane. Functionally, S100A8 is a calcium- and zinc-binding protein which plays a prominent role in the regulation of inflammatory processes and immune response. It can induce neutrophil chemotaxis and adhesion. Predominantly found as calprotectin (S100A8/A9) which has a wide plethora of intra- and extracellular functions. The intracellular functions include: facilitating leukocyte arachidonic acid trafficking and metabolism, modulation of the tubulin-dependent cytoskeleton during migration of phagocytes and activation of the neutrophilic NADPH-oxidase. Also participates in regulatory T-cell differentiation together with CD69. Activates NADPH-oxidase by facilitating the enzyme complex assembly at the cell membrane, transferring arachidonic acid, an essential cofactor, to the enzyme complex and S100A8 contributes to the enzyme assembly by directly binding to NCF2/P67PHOX. The extracellular functions involve pro-inflammatory, antimicrobial, oxidant-scavenging and apoptosis-inducing activities. Its pro-inflammatory activity includes recruitment of leukocytes, promotion of cytokine and chemokine production, and regulation of leukocyte adhesion and migration. Acts as an alarmin or a danger associated molecular pattern (DAMP) molecule and stimulates innate immune cells via binding to pattern recognition receptors such as Toll-like receptor 4 (TLR4) and receptor for advanced glycation endproducts (AGER). Binding to TLR4 and AGER activates the MAP-kinase and NF-kappa-B signaling pathways resulting in the amplification of the pro-inflammatory cascade. Has antimicrobial activity towards bacteria and fungi and exerts its antimicrobial activity probably via chelation of Zn(2+) which is essential for microbial growth. Can induce cell death via autophagy and apoptosis and this occurs through the cross-talk of mitochondria and lysosomes via reactive oxygen species (ROS) and the process involves BNIP3. Can regulate neutrophil number and apoptosis by an anti-apoptotic effect; regulates cell survival via ITGAM/ITGB and TLR4 and a signaling mechanism involving MEK-ERK. Its role as an oxidant scavenger has a protective role in preventing exaggerated tissue damage by scavenging oxidants. The iNOS-S100A8/A9 transnitrosylase complex is proposed to direct selective inflammatory stimulus-dependent S-nitrosylation of multiple targets such as GAPDH, ANXA5, EZR, MSN and VIM by recognizing a [IL]-x-C-x-x-[DE] motif; S100A8 seems to contribute to S-nitrosylation site selectivity. The chain is Protein S100-A8 (S100a8) from Rattus norvegicus (Rat).